Reading from the N-terminus, the 68-residue chain is Large ribosomal subunit protein uL29 (68 aa).

Positions Gln32 to Ala68 are disordered. Positions Pro45 to Ala56 are enriched in basic and acidic residues.

It belongs to the universal ribosomal protein uL29 family.

The protein is Large ribosomal subunit protein uL29 of Myxococcus xanthus (strain DK1622).